Here is a 233-residue protein sequence, read N- to C-terminus: MSNLSNLRHKLQNGLIASCQPVPGSAMDTPEIVAAMACAALAGGAVGLRIEGISNIQAVRRATDAPIIGIIKRDLPDSEVRITPWLEDIDALSAAGADIIAFDVTCRERPVSVADLYQRARATGCLTMADASNIDDGLLAHHLGIDFIGTTLSGYTQAIVPTEPDLALVTQLAQAGCRVIAEGRYHSPALAAAAISAGAYAVTVGSAITRIEHICGWFCDAIKQCETEKLTEY.

It belongs to the NanE family.

The catalysed reaction is an N-acyl-D-glucosamine 6-phosphate = an N-acyl-D-mannosamine 6-phosphate. It functions in the pathway amino-sugar metabolism; N-acetylneuraminate degradation; D-fructose 6-phosphate from N-acetylneuraminate: step 3/5. Functionally, converts N-acetylmannosamine-6-phosphate (ManNAc-6-P) to N-acetylglucosamine-6-phosphate (GlcNAc-6-P). The polypeptide is Putative N-acetylmannosamine-6-phosphate 2-epimerase (Yersinia pseudotuberculosis serotype IB (strain PB1/+)).